Reading from the N-terminus, the 200-residue chain is Thymidine kinase (200 aa).

Residues 9-16 (STMNAGKS) and 88-91 (DEAH) contribute to the ATP site. Glu89 serves as the catalytic Proton acceptor. Zn(2+) contacts are provided by Cys146, Cys148, Cys183, and His186.

The protein belongs to the thymidine kinase family. In terms of assembly, homotetramer.

The protein resides in the cytoplasm. It catalyses the reaction thymidine + ATP = dTMP + ADP + H(+). The polypeptide is Thymidine kinase (Rhizobium etli (strain ATCC 51251 / DSM 11541 / JCM 21823 / NBRC 15573 / CFN 42)).